We begin with the raw amino-acid sequence, 181 residues long: Oligoribonuclease (181 aa).

The region spanning 8 to 171 (LIWIDLEMTG…DDIRESVAEL (164 aa)) is the Exonuclease domain. Residue tyrosine 129 is part of the active site.

It belongs to the oligoribonuclease family.

Its subcellular location is the cytoplasm. Functionally, 3'-to-5' exoribonuclease specific for small oligoribonucleotides. This is Oligoribonuclease from Klebsiella pneumoniae subsp. pneumoniae (strain ATCC 700721 / MGH 78578).